Here is a 363-residue protein sequence, read N- to C-terminus: 3-isopropylmalate dehydrogenase A (363 aa).

Residue 78–89 coordinates NAD(+); it reads GPKWGTGAVRPE. Residues R96, R106, R135, and D222 each contribute to the substrate site. Residues D222, D247, and D251 each contribute to the Mg(2+) site. 287–299 lines the NAD(+) pocket; it reads GSAPDIAGKGIVN.

The protein belongs to the isocitrate and isopropylmalate dehydrogenases family. Homodimer. Mg(2+) serves as cofactor. Requires Mn(2+) as cofactor.

The protein resides in the cytoplasm. The enzyme catalyses (2R,3S)-3-isopropylmalate + NAD(+) = 4-methyl-2-oxopentanoate + CO2 + NADH. It functions in the pathway amino-acid biosynthesis; L-leucine biosynthesis; L-leucine from 3-methyl-2-oxobutanoate: step 3/4. Catalyzes the oxidation of 3-carboxy-2-hydroxy-4-methylpentanoate (3-isopropylmalate) to 3-carboxy-4-methyl-2-oxopentanoate. The product decarboxylates to 4-methyl-2 oxopentanoate. The polypeptide is 3-isopropylmalate dehydrogenase A (leu2A) (Aspergillus niger).